The chain runs to 335 residues: Beta-ketoacyl-[acyl-carrier-protein] synthase III (335 aa).

Active-site residues include cysteine 119 and histidine 261. An ACP-binding region spans residues glutamine 262 to arginine 266. Asparagine 291 is an active-site residue.

It belongs to the thiolase-like superfamily. FabH family. In terms of assembly, homodimer.

It localises to the cytoplasm. The catalysed reaction is malonyl-[ACP] + acetyl-CoA + H(+) = 3-oxobutanoyl-[ACP] + CO2 + CoA. Its pathway is lipid metabolism; fatty acid biosynthesis. Catalyzes the condensation reaction of fatty acid synthesis by the addition to an acyl acceptor of two carbons from malonyl-ACP. Catalyzes the first condensation reaction which initiates fatty acid synthesis and may therefore play a role in governing the total rate of fatty acid production. Possesses both acetoacetyl-ACP synthase and acetyl transacylase activities. Its substrate specificity determines the biosynthesis of branched-chain and/or straight-chain of fatty acids. The polypeptide is Beta-ketoacyl-[acyl-carrier-protein] synthase III (Prochlorococcus marinus (strain MIT 9515)).